Here is a 327-residue protein sequence, read N- to C-terminus: MFNDIPVFDYEDIQLIPNKCIISSRSQADTSVKLGNYTFKLPVIPANMQTIIDEEVAETLACEGYFYIMHRFNEEERKPFIKRMHDKGLIASISVGVKDYEYDFVTSLKEDAPEFITIDIAHGHSNSVIEMIQHIKQELPETFVIAGNVGTPEAVRELENAGADATKVGIGPGKVCITKVKTGFGTGGWQLAALRWCSKAARKPIIADGGIRTHGDIAKSIRFGASMVMIGSLFAGHLESPGKLVEVDGQQFKEYYGSASEYQKGEHKNVEGKKILLPVKGRLEDTLTEMQQDLQSSISYAGGKELDSLRHVDYVIVKNSIWNGDSI.

The Thioimidate intermediate role is filled by C176. An NADP(+)-binding site is contributed by 205–228; sequence IIADGGIRTHGDIAKSIRFGASMV.

This sequence belongs to the IMPDH/GMPR family. GuaC type 2 subfamily.

The catalysed reaction is IMP + NH4(+) + NADP(+) = GMP + NADPH + 2 H(+). In terms of biological role, catalyzes the irreversible NADPH-dependent deamination of GMP to IMP. It functions in the conversion of nucleobase, nucleoside and nucleotide derivatives of G to A nucleotides, and in maintaining the intracellular balance of A and G nucleotides. This is GMP reductase from Streptococcus agalactiae serotype III (strain NEM316).